Here is a 455-residue protein sequence, read N- to C-terminus: GTPase Der (455 aa).

EngA-type G domains are found at residues 4–169 (PIVA…PKDQ) and 178–355 (LRVS…GQHQ). Residues 10 to 17 (GRPNVGKS), 57 to 61 (DTGGL), 120 to 123 (NKLE), 184 to 191 (GRPNVGKS), 233 to 237 (DTAGI), and 298 to 301 (NKWD) each bind GTP. The region spanning 356 to 441 (RRVSTSVLNE…PVRFIFRGKP (86 aa)) is the KH-like domain.

Belongs to the TRAFAC class TrmE-Era-EngA-EngB-Septin-like GTPase superfamily. EngA (Der) GTPase family. In terms of assembly, associates with the 50S ribosomal subunit.

Its function is as follows. GTPase that plays an essential role in the late steps of ribosome biogenesis. The chain is GTPase Der from Gloeobacter violaceus (strain ATCC 29082 / PCC 7421).